We begin with the raw amino-acid sequence, 402 residues long: CinA-like protein (402 aa).

The protein belongs to the CinA family.

The chain is CinA-like protein from Escherichia coli O17:K52:H18 (strain UMN026 / ExPEC).